We begin with the raw amino-acid sequence, 320 residues long: Nicotianamine synthase 3 (320 aa).

It belongs to the nicotianamine synthase (NAS)-like family. As to expression, in shoots.

It carries out the reaction 3 S-adenosyl-L-methionine = nicotianamine + 3 S-methyl-5'-thioadenosine + 3 H(+). Functionally, synthesizes nicotianamine, a polyamine which serves as a sensor for the physiological iron status within the plant, and/or might be involved in the transport of iron. The polypeptide is Nicotianamine synthase 3 (NAS3) (Arabidopsis thaliana (Mouse-ear cress)).